Here is a 318-residue protein sequence, read N- to C-terminus: Magnetosome protein MamM (318 aa).

Positions 1–210 are transmembrane domain (TMD); that stretch reads MRKSGCTVCS…FMDAYRGLMD (210 aa). 4 helical membrane passes run 13–33, 39–59, 81–101, and 117–137; these read IGWVGLAVNTVLMVMKAFVGL, AMLADAMYSLKDMLNALMVVI, FILSMVVSVVFIGLTGYLLVH, and LIVLWAALVSVGVNVAMYFYS. Residues 211–318 form a C-terminal domain (CTD) region; sequence HTAGEAVQNR…DEVMLSKVDN (108 aa). Fe cation-binding residues include aspartate 249, histidine 264, histidine 285, and glutamate 289.

It belongs to the cation diffusion facilitator (CDF) transporter (TC 2.A.4) family. As to quaternary structure, forms homodimers via its C-terminal domain (CTD) in the presence of metal cations. Interacts with MamB via their CTD.

Its subcellular location is the magnetosome membrane. The protein resides in the cell inner membrane. Its function is as follows. Probably plays a role in biomineralization. Required for stable accumulation of MamB. Probably binds and transports iron. May nucleate iron crystal formation. This is Magnetosome protein MamM (mamM) from Paramagnetospirillum magneticum (strain ATCC 700264 / AMB-1) (Magnetospirillum magneticum).